A 347-amino-acid polypeptide reads, in one-letter code: Protein POOR HOMOLOGOUS SYNAPSIS 1 (347 aa).

It localises to the cytoplasm. Its function is as follows. Required for accurate chromosome segregation in meiosis. Required for pairing to occur between homologous chromosomes. Acts in early recombination steps and ensures pairing fidelity and proper repair of meiotic DNA double-strand-breaks. Regulates recombination and pairing of homologous chromosomes during meiotic prophase by controlling transport of RAD50 from cytoplasm to the nucleus. May affect pairing of the gene-rich fraction of the genome rather than preventing pairing between repetitive DNA elements. The chain is Protein POOR HOMOLOGOUS SYNAPSIS 1 from Zea mays (Maize).